The primary structure comprises 179 residues: ATP synthase subunit delta (179 aa).

It belongs to the ATPase delta chain family. F-type ATPases have 2 components, F(1) - the catalytic core - and F(0) - the membrane proton channel. F(1) has five subunits: alpha(3), beta(3), gamma(1), delta(1), epsilon(1). F(0) has three main subunits: a(1), b(2) and c(10-14). The alpha and beta chains form an alternating ring which encloses part of the gamma chain. F(1) is attached to F(0) by a central stalk formed by the gamma and epsilon chains, while a peripheral stalk is formed by the delta and b chains.

The protein resides in the cell inner membrane. Its function is as follows. F(1)F(0) ATP synthase produces ATP from ADP in the presence of a proton or sodium gradient. F-type ATPases consist of two structural domains, F(1) containing the extramembraneous catalytic core and F(0) containing the membrane proton channel, linked together by a central stalk and a peripheral stalk. During catalysis, ATP synthesis in the catalytic domain of F(1) is coupled via a rotary mechanism of the central stalk subunits to proton translocation. In terms of biological role, this protein is part of the stalk that links CF(0) to CF(1). It either transmits conformational changes from CF(0) to CF(1) or is implicated in proton conduction. The polypeptide is ATP synthase subunit delta (Burkholderia pseudomallei (strain 1710b)).